We begin with the raw amino-acid sequence, 137 residues long: ATP synthase epsilon chain, chloroplastic (137 aa).

It belongs to the ATPase epsilon chain family. In terms of assembly, F-type ATPases have 2 components, CF(1) - the catalytic core - and CF(0) - the membrane proton channel. CF(1) has five subunits: alpha(3), beta(3), gamma(1), delta(1), epsilon(1). CF(0) has three main subunits: a, b and c.

Its subcellular location is the plastid. The protein resides in the chloroplast thylakoid membrane. Functionally, produces ATP from ADP in the presence of a proton gradient across the membrane. The sequence is that of ATP synthase epsilon chain, chloroplastic from Hordeum vulgare (Barley).